The chain runs to 486 residues: Transcription factor VOZ1 (486 aa).

The interval 208-405 is VOZ; it reads PPSAFLGPKC…VDGKKTSKGK (198 aa). C217, C222, C236, and H240 together coordinate Zn(2+). The segment at 217–240 adopts a C3H1-type; atypical zinc-finger fold; that stretch reads CALWDCPRPAQGFDWFQDYCSSFH. The interval 424 to 445 is disordered; the sequence is EFPPENNTTNTTNNNKRCIKGR. Residues 429–438 are compositionally biased toward low complexity; sequence NNTTNTTNNN.

Homodimer. Interacts with phytochrome B (phyB). In terms of tissue distribution, ubiquitous. Expressed in the vascular bundles of various tissues, specifically in the phloem.

The protein resides in the cytoplasm. It is found in the nucleus. Its function is as follows. Transcriptional activator acting positively in the phytochrome B signaling pathway. Functions redundantly with VOZ2 to promote flowering downstream of phytochrome B (phyB). Down-regulates 'FLOWERING LOCUS C' (FLC) and up-regulates 'FLOWERING LOCUS T' (FT). Binds to the 38-bp cis-acting region of the AVP1 gene. Interacts with phyB in the cytoplasm and is translocated to the nucleus at signal transmission, where it is subjected to degradation in a phytochrome-dependent manner. This Arabidopsis thaliana (Mouse-ear cress) protein is Transcription factor VOZ1 (VOZ1).